Reading from the N-terminus, the 176-residue chain is MIKPVLKMGDPCLLQPARRVDQFGTPELEALLQDMQDTMAALNGAGLAAPQIGVSLQVVIFGVEHSPRYPDAESVPFTVLINPVLTPLTEQMEEDWEGCLSIPGMRGLVPRYTRLRYQGVDAAGASIDRTVTGFHARVVQHECDHLNGILYPMRINDLRKFGYTDTLFPGQTIADD.

Fe cation contacts are provided by Cys99 and His141. The active site involves Glu142. His145 serves as a coordination point for Fe cation.

The protein belongs to the polypeptide deformylase family. Requires Fe(2+) as cofactor.

The catalysed reaction is N-terminal N-formyl-L-methionyl-[peptide] + H2O = N-terminal L-methionyl-[peptide] + formate. Removes the formyl group from the N-terminal Met of newly synthesized proteins. Requires at least a dipeptide for an efficient rate of reaction. N-terminal L-methionine is a prerequisite for activity but the enzyme has broad specificity at other positions. The polypeptide is Peptide deformylase 1 (Nitrosomonas europaea (strain ATCC 19718 / CIP 103999 / KCTC 2705 / NBRC 14298)).